Here is a 546-residue protein sequence, read N- to C-terminus: Methionine--tRNA ligase (546 aa).

The short motif at Pro15–His25 is the 'HIGH' region element. Zn(2+) is bound by residues Cys146, Cys149, Cys159, and Cys162. Positions Lys332–Ser336 match the 'KMSKS' region motif. Lys335 serves as a coordination point for ATP.

Belongs to the class-I aminoacyl-tRNA synthetase family. MetG type 1 subfamily. As to quaternary structure, monomer. Requires Zn(2+) as cofactor.

It is found in the cytoplasm. It carries out the reaction tRNA(Met) + L-methionine + ATP = L-methionyl-tRNA(Met) + AMP + diphosphate. In terms of biological role, is required not only for elongation of protein synthesis but also for the initiation of all mRNA translation through initiator tRNA(fMet) aminoacylation. The polypeptide is Methionine--tRNA ligase (Coxiella burnetii (strain Dugway 5J108-111)).